The sequence spans 419 residues: UDP-N-acetylglucosamine 1-carboxyvinyltransferase (419 aa).

Residue 22–23 (KN) participates in phosphoenolpyruvate binding. Position 92 (arginine 92) interacts with UDP-N-acetyl-alpha-D-glucosamine. Cysteine 116 functions as the Proton donor in the catalytic mechanism. Cysteine 116 carries the post-translational modification 2-(S-cysteinyl)pyruvic acid O-phosphothioketal. UDP-N-acetyl-alpha-D-glucosamine-binding positions include 121-125 (RPIDL), aspartate 306, and isoleucine 328.

It belongs to the EPSP synthase family. MurA subfamily.

It localises to the cytoplasm. The catalysed reaction is phosphoenolpyruvate + UDP-N-acetyl-alpha-D-glucosamine = UDP-N-acetyl-3-O-(1-carboxyvinyl)-alpha-D-glucosamine + phosphate. It participates in cell wall biogenesis; peptidoglycan biosynthesis. Its function is as follows. Cell wall formation. Adds enolpyruvyl to UDP-N-acetylglucosamine. Target for the antibiotic fosfomycin. This Streptococcus pneumoniae (strain Hungary19A-6) protein is UDP-N-acetylglucosamine 1-carboxyvinyltransferase.